The sequence spans 288 residues: Bifunctional protein FolD (288 aa).

Residues 166–168 (GAS) and Ile-232 contribute to the NADP(+) site.

It belongs to the tetrahydrofolate dehydrogenase/cyclohydrolase family. In terms of assembly, homodimer.

The enzyme catalyses (6R)-5,10-methylene-5,6,7,8-tetrahydrofolate + NADP(+) = (6R)-5,10-methenyltetrahydrofolate + NADPH. The catalysed reaction is (6R)-5,10-methenyltetrahydrofolate + H2O = (6R)-10-formyltetrahydrofolate + H(+). It participates in one-carbon metabolism; tetrahydrofolate interconversion. Functionally, catalyzes the oxidation of 5,10-methylenetetrahydrofolate to 5,10-methenyltetrahydrofolate and then the hydrolysis of 5,10-methenyltetrahydrofolate to 10-formyltetrahydrofolate. The polypeptide is Bifunctional protein FolD (Klebsiella pneumoniae (strain 342)).